Consider the following 260-residue polypeptide: Na(+)-translocating NADH-quinone reductase subunit C (260 aa).

A helical transmembrane segment spans residues 12–32 (LLVIILLSLACSIIVAGSAVL). Position 226 is an FMN phosphoryl threonine (threonine 226).

This sequence belongs to the NqrC family. As to quaternary structure, composed of six subunits; NqrA, NqrB, NqrC, NqrD, NqrE and NqrF. It depends on FMN as a cofactor.

Its subcellular location is the cell inner membrane. The enzyme catalyses a ubiquinone + n Na(+)(in) + NADH + H(+) = a ubiquinol + n Na(+)(out) + NAD(+). NQR complex catalyzes the reduction of ubiquinone-1 to ubiquinol by two successive reactions, coupled with the transport of Na(+) ions from the cytoplasm to the periplasm. NqrA to NqrE are probably involved in the second step, the conversion of ubisemiquinone to ubiquinol. This is Na(+)-translocating NADH-quinone reductase subunit C from Pasteurella multocida (strain Pm70).